Reading from the N-terminus, the 991-residue chain is UvrABC system protein A (991 aa).

ATP is bound at residue 48–55; the sequence is GLSGSGKS. ABC transporter domains follow at residues 345–624 and 644–972; these read WAKS…PKSL and NHRR…KFLE. 676-683 is an ATP binding site; it reads GVSGGGKS. The C4-type zinc-finger motif lies at 775–801; the sequence is CEACQGDGVIKIEMHFLPDVYVTCDVC.

It belongs to the ABC transporter superfamily. UvrA family. In terms of assembly, forms a heterotetramer with UvrB during the search for lesions.

Its subcellular location is the cytoplasm. In terms of biological role, the UvrABC repair system catalyzes the recognition and processing of DNA lesions. UvrA is an ATPase and a DNA-binding protein. A damage recognition complex composed of 2 UvrA and 2 UvrB subunits scans DNA for abnormalities. When the presence of a lesion has been verified by UvrB, the UvrA molecules dissociate. This is UvrABC system protein A from Bradyrhizobium diazoefficiens (strain JCM 10833 / BCRC 13528 / IAM 13628 / NBRC 14792 / USDA 110).